The primary structure comprises 190 residues: FMRFamide-related peptides (190 aa).

Positions 1 to 21 (MSCSRTVALLAALWLVVGATS) are cleaved as a signal peptide. A propeptide spanning residues 22–33 (SPVRRSPDLEAR) is cleaved from the precursor. Position 45 is a phenylalanine amide (F45). The propeptide occupies 69–104 (GNSFLRFGRSQPLTLSTDDLVSLLRAYEEDYDTPMT). Residue F113 is modified to Phenylalanine amide. The propeptide occupies 116 to 150 (DPNFIRLGRSADDDKSAFEQNSELVVSGYPQRKSR). Residue L158 is modified to Leucine amide. A propeptide spanning residues 160-190 (RDSEEVNENEFEETEESRRKRSADSCHDCQS) is cleaved from the precursor. Residues 161–190 (DSEEVNENEFEETEESRRKRSADSCHDCQS) are disordered. A compositionally biased stretch (acidic residues) spans 164-174 (EVNENEFEETE). Residues 175 to 190 (ESRRKRSADSCHDCQS) are compositionally biased toward basic and acidic residues.

The protein belongs to the FARP (FMRFamide related peptide) family. As to expression, RFamide 1: Expressed in corpora cardiaca (CC), corpora allata (CA), antennal lobe (AL) and gnathal ganglion (GNG) (at protein level). Expression in AL detected in most animals, in CC, CA and in GNG in some animals (at protein level). RFamide precursor-related peptide 2: Expressed in corpora cardiaca (CC), corpora allata (CA), antennal lobe (AL) and gnathal ganglion (GNG) (at protein level). Expression in AL detected in some animals, expression in CC, CA and GNG in few animals (at protein level). RFamide 3: Expressed in corpora cardiaca (CC), corpora allata (CA), antennal lobe (AL) and gnathal ganglion (GNG) (at protein level). Expression in AL detected in all animals, in CC, CA and GNG in most animals (at protein level). RFamide 5: Expressed in corpora cardiaca (CC), corpora allata (CA), antennal lobe (AL) and gnathal ganglion (GNG) (at protein level). Expression in AL detected in all animals, in CC, CA and in GNG in some animals (at protein level).

The protein localises to the secreted. In insects, FMRFamide and related peptides have modulatory actions at skeletal neuromuscular junctions, and peptides that are immunologically related to FMRFamide are released into the circulation from neurohemal organs. This Agrotis ipsilon (Black cutworm moth) protein is FMRFamide-related peptides.